Consider the following 279-residue polypeptide: Ribonuclease T2 protein rnst-2 (279 aa).

Residues 1–17 (MKLLLLLCISCIPLAYS) form the signal peptide. An intrachain disulfide couples Cys37 to Cys48. Residue His60 is part of the active site. Residue Asn68 is glycosylated (N-linked (GlcNAc...) asparagine). Active-site residues include Glu114 and His118. An intrachain disulfide couples Cys200 to Cys210.

This sequence belongs to the RNase T2 family. As to expression, expressed in the pharynx, hypodermis, muscle cells, sheath cells, intestinal cells, the vulva and tail regions.

It is found in the lysosome. It carries out the reaction a ribonucleotidyl-ribonucleotide-RNA + H2O = a 3'-end 3'-phospho-ribonucleotide-RNA + a 5'-end dephospho-ribonucleoside-RNA + H(+). Functionally, probable endoribonuclease involved in the autophagy-mediated degradation of ribosomal RNA and ribosomal proteins in lysosomes. This chain is Ribonuclease T2 protein rnst-2, found in Caenorhabditis elegans.